The primary structure comprises 367 residues: Uroporphyrinogen decarboxylase (367 aa).

Residues 27–31 (RQAGR), Asp77, Tyr157, Thr212, and His333 contribute to the substrate site.

It belongs to the uroporphyrinogen decarboxylase family. Homodimer.

It is found in the cytoplasm. The catalysed reaction is uroporphyrinogen III + 4 H(+) = coproporphyrinogen III + 4 CO2. Its pathway is porphyrin-containing compound metabolism; protoporphyrin-IX biosynthesis; coproporphyrinogen-III from 5-aminolevulinate: step 4/4. In terms of biological role, catalyzes the decarboxylation of four acetate groups of uroporphyrinogen-III to yield coproporphyrinogen-III. The sequence is that of Uroporphyrinogen decarboxylase from Cupriavidus metallidurans (strain ATCC 43123 / DSM 2839 / NBRC 102507 / CH34) (Ralstonia metallidurans).